The chain runs to 66 residues: KGRTVEIFNSFELLLDPTTQTLDRSFLEKKQELYKKMLNSRIRVLHQYLAAKFNTAYERNTRRGGR.

Belongs to the peptidase M67A family. CSN6 subfamily. In terms of assembly, component of the CSN complex, probably composed of CSN1, CSN2, CSN3, CSN4, CSN5 (CSN5A or CSN5B), CSN6 (CSN6A or CSN6B), CSN7 and CSN8.

It is found in the cytoplasm. The protein localises to the nucleus. Component of the COP9 signalosome complex (CSN), a complex involved in various cellular and developmental processes such as photomorphogenesis and auxin and jasmonate responses. The CSN complex is an essential regulator of the ubiquitin (Ubl) conjugation pathway by mediating the deneddylation of the cullin subunits of SCF-type E3 ligase complexes, leading to decrease the Ubl ligase activity of SCF. It is involved in repression of photomorphogenesis in darkness by regulating the activity of COP1-containing Ubl ligase complexes. This is COP9 signalosome complex subunit 6a (CSN6A) from Brassica oleracea (Wild cabbage).